The primary structure comprises 382 residues: uncharacterized protein (382 aa).

The next 12 helical transmembrane spans lie at 14–34, 45–65, 79–99, 102–122, 131–151, 157–177, 204–224, 235–255, 270–290, 291–311, 325–345, and 348–368; these read GLLL…LWLA, VVSS…GYVI, FIFA…SWLA, FVAG…LMCS, LLAA…LLVS, LMSV…PLLF, LGVN…GLMP, ASIG…QWPI, VQVF…AMAP, ALFI…AWAC, ALLL…AMLM, and FSDN…LLML.

The protein belongs to the major facilitator superfamily. YcaD (TC 2.A.1.26) family.

The protein resides in the cell inner membrane. This is an uncharacterized protein from Escherichia coli O7:K1 (strain IAI39 / ExPEC).